A 261-amino-acid polypeptide reads, in one-letter code: uncharacterized protein (261 aa).

Transmembrane regions (helical) follow at residues 4–21 (RLIAIATFVVTFGILIVL) and 33–55 (FSILSILAAVLTIAAYFFTLVLF).

It localises to the cell membrane. This is an uncharacterized protein from Archaeoglobus fulgidus (strain ATCC 49558 / DSM 4304 / JCM 9628 / NBRC 100126 / VC-16).